Reading from the N-terminus, the 316-residue chain is tRNA dimethylallyltransferase (316 aa).

17-24 (GPTASGKT) is an ATP binding site. 19–24 (TASGKT) is a substrate binding site. Interaction with substrate tRNA regions lie at residues 42–45 (DSAL), 166–170 (QRLSR), and 247–252 (RCVGYR).

This sequence belongs to the IPP transferase family. Monomer. Mg(2+) is required as a cofactor.

The catalysed reaction is adenosine(37) in tRNA + dimethylallyl diphosphate = N(6)-dimethylallyladenosine(37) in tRNA + diphosphate. Catalyzes the transfer of a dimethylallyl group onto the adenine at position 37 in tRNAs that read codons beginning with uridine, leading to the formation of N6-(dimethylallyl)adenosine (i(6)A). This Salmonella arizonae (strain ATCC BAA-731 / CDC346-86 / RSK2980) protein is tRNA dimethylallyltransferase.